The sequence spans 143 residues: Small ribosomal subunit protein uS11c (143 aa).

This sequence belongs to the universal ribosomal protein uS11 family. Part of the 30S ribosomal subunit.

It localises to the plastid. The protein resides in the chloroplast. The polypeptide is Small ribosomal subunit protein uS11c (Saccharum officinarum (Sugarcane)).